Reading from the N-terminus, the 49-residue chain is Large ribosomal subunit protein bL32 (49 aa).

Residues 25-49 (AKPVKDKDGTYKLPHHINPTTGEYK) form a disordered region.

Belongs to the bacterial ribosomal protein bL32 family.

The sequence is that of Large ribosomal subunit protein bL32 from Sulfurimonas denitrificans (strain ATCC 33889 / DSM 1251) (Thiomicrospira denitrificans (strain ATCC 33889 / DSM 1251)).